Here is a 544-residue protein sequence, read N- to C-terminus: MSSYSYDPYYTPYKRRVVESSPRVHIRSSYVSPSRTTYSPLVSTTMRRSYATSSSSSFLPSVDTMDLSQVAAISSDLKIVRTQEKVQLQDLNDRFANFIERVHELEQRNKVLEAELLLLRQKHNEPSRLRDMYEKEVRDVRLAQEEASGDRQTLRNERERLEDALRVLQGRYEEEAMSREDSEARLLDVRKEADMAALARVELEKRMDSLLDEIAFLKKVHEEELSQLQSQVQYAQVSLEVEVAKPDLSSALRDIRGQYEKLAAKNMQSAEEWFKSRFTVLTQSAARNTDAVRAAKDEMSESRRMLSAKGLEIEACRGVNEALQRQIQELEDKQSGEIAGMQDAINKLEEELRNTKSEMARYLKEYQDLLNVKMALDIEIAAYRKLLEGEETRLSFSGVGAITSGYTQSAPVFGRSAYSLQSSSYMTSRAFPTYYSSHVQEEQLDIEETIESSRAEEAKAEAPEEEEEEAAEEEGEGGEEAEEEGEEGEEAKEEEAEEEGGQEKEEEGEEGEGEAEAEGDGEEEGESKGDEAAEEESEKKEKKK.

Ser2 bears the N-acetylserine mark. Positions 2-87 are head; it reads SSYSYDPYYT…KIVRTQEKVQ (86 aa). The region spanning 84-394 is the IF rod domain; sequence EKVQLQDLND…KLLEGEETRL (311 aa). The coil 1A stretch occupies residues 88 to 119; sequence LQDLNDRFANFIERVHELEQRNKVLEAELLLL. Residues 120-132 form a linker 1 region; it reads RQKHNEPSRLRDM. Residues 133–228 form a coil 1B region; sequence YEKEVRDVRL…KVHEEELSQL (96 aa). Residues 229 to 246 form a linker 12 region; it reads QSQVQYAQVSLEVEVAKP. The interval 247–265 is coil 2A; it reads DLSSALRDIRGQYEKLAAK. A linker 2 region spans residues 266–274; sequence NMQSAEEWF. The tract at residues 275-390 is coil 2B; the sequence is KSRFTVLTQS…AAYRKLLEGE (116 aa). The tail, subdomain A stretch occupies residues 391–435; that stretch reads ETRLSFSGVGAITSGYTQSAPVFGRSAYSLQSSSYMTSRAFPTYY. The interval 391–544 is tail; the sequence is ETRLSFSGVG…EESEKKEKKK (154 aa). The segment at 436–544 is tail, subdomain B (acidic); that stretch reads SSHVQEEQLD…EESEKKEKKK (109 aa). The interval 450–544 is disordered; it reads IESSRAEEAK…EESEKKEKKK (95 aa). The span at 451–462 shows a compositional bias: basic and acidic residues; that stretch reads ESSRAEEAKAEA. Acidic residues predominate over residues 463 to 525; the sequence is PEEEEEEAAE…EAEGDGEEEG (63 aa). Residues 526–544 are compositionally biased toward basic and acidic residues; the sequence is ESKGDEAAEEESEKKEKKK.

The protein belongs to the intermediate filament family. Forms homodimers (in vitro).

The protein localises to the cell projection. It is found in the axon. The protein resides in the cytoplasm. It localises to the cytoskeleton. Neurofilaments usually contain three intermediate filament proteins: NEFL, NEFM, and NEFH which are involved in the maintenance of neuronal caliber. May additionally cooperate with other neuronal intermediate filament proteins to form neuronal filamentous networks. The polypeptide is Neurofilament light polypeptide (nefl) (Xenopus laevis (African clawed frog)).